We begin with the raw amino-acid sequence, 163 residues long: C-type lectin lectoxin-Lio2 (163 aa).

The N-terminal stretch at 1 to 21 is a signal peptide; the sequence is MERFIFAALLVVALSLSGTGA. 3 disulfides stabilise this stretch: Cys-25–Cys-36, Cys-53–Cys-152, and Cys-127–Cys-144. The C-type lectin domain occupies 32–153; the sequence is SDGYCYKVFK…CRSKRYFICK (122 aa). Residues 117–119 carry the Mannose-binding motif; it reads EPN. Ca(2+) contacts are provided by Glu-125 and Asp-141.

This sequence belongs to the true venom lectin family. Expressed by the venom gland.

Its subcellular location is the secreted. Its function is as follows. Mannose-binding lectin which recognizes specific carbohydrate structures and agglutinates a variety of animal cells by binding to cell-surface glycoproteins and glycolipids. May be a calcium-dependent lectin. This is C-type lectin lectoxin-Lio2 from Erythrolamprus poecilogyrus (Water snake).